A 114-amino-acid polypeptide reads, in one-letter code: Hydrogenase maturation factor HypA (114 aa).

H2 is a binding site for Ni(2+). Zn(2+) is bound by residues C73, C76, C89, and C92.

The protein belongs to the HypA/HybF family.

Involved in the maturation of [NiFe] hydrogenases. Required for nickel insertion into the metal center of the hydrogenase. This chain is Hydrogenase maturation factor HypA, found in Psychromonas ingrahamii (strain DSM 17664 / CCUG 51855 / 37).